Here is a 376-residue protein sequence, read N- to C-terminus: Deoxyhypusine synthase (376 aa).

NAD(+) contacts are provided by residues 112 to 116 (SNLVS), 138 to 140 (TAG), Glu144, and Asp245. Position 143–144 (143–144 (EE)) interacts with spermidine. Asp250 is a binding site for spermidine. Gly292 is an NAD(+) binding site. His297 lines the spermidine pocket. 317–318 (TA) is an NAD(+) binding site. Spermidine contacts are provided by residues 323–325 (GSD) and 332–338 (EAISWGK). The active-site Nucleophile is the Lys338. An NAD(+)-binding site is contributed by 351–352 (DA).

The protein belongs to the deoxyhypusine synthase family. The cofactor is NAD(+).

It catalyses the reaction [eIF5A protein]-L-lysine + spermidine = [eIF5A protein]-deoxyhypusine + propane-1,3-diamine. The protein operates within protein modification; eIF5A hypusination. Its function is as follows. Catalyzes the NAD-dependent oxidative cleavage of spermidine and the subsequent transfer of the butylamine moiety of spermidine to the epsilon-amino group of a specific lysine residue of the eIF-5A precursor protein to form the intermediate deoxyhypusine residue. Also able to produce homospermidine from putrescine. In Musa acuminata (Banana), this protein is Deoxyhypusine synthase (DHS).